A 238-amino-acid chain; its full sequence is Flagellar L-ring protein (238 aa).

A signal peptide spans 1-16; the sequence is MNKAILAVAMVLLLAG. Residue cysteine 17 is the site of N-palmitoyl cysteine attachment. Cysteine 17 carries the S-diacylglycerol cysteine lipid modification.

Belongs to the FlgH family. As to quaternary structure, the basal body constitutes a major portion of the flagellar organelle and consists of four rings (L,P,S, and M) mounted on a central rod.

The protein resides in the cell outer membrane. Its subcellular location is the bacterial flagellum basal body. Assembles around the rod to form the L-ring and probably protects the motor/basal body from shearing forces during rotation. This is Flagellar L-ring protein from Brucella abortus (strain 2308).